The sequence spans 473 residues: Serine palmitoyltransferase 1 (473 aa).

Over 1-15 (MATATEQWVLVEMVQ) the chain is Lumenal. The interaction with SPTLC2 stretch occupies residues 1–66 (MATATEQWVL…KEELIEEWQP (66 aa)). A helical transmembrane segment spans residues 16-36 (ALYEAPAYHLILEGILILWII). The Cytoplasmic portion of the chain corresponds to 37-473 (RLLFSKTYKL…IKEVAQAVLL (437 aa)). Residue Tyr164 is modified to Phosphotyrosine; by ABL.

This sequence belongs to the class-II pyridoxal-phosphate-dependent aminotransferase family. As to quaternary structure, component of the serine palmitoyltransferase (SPT) complex, which is also composed of SPTLC2 or SPTLC3 and SPTSSA or SPTSSB. The heterodimer consisting of SPTLC1 and SPTLC2/SPTLC3 forms the catalytic core of the enzyme, while SPTSSA or SPTSSB subunits determine substrate specificity. SPT also interacts with ORMDL proteins, especially ORMDL3, which negatively regulate SPT activity in the presence of ceramides. Forms dimers of heterodimers with SPTLC2. Interacts with RTN4 (isoform B). Pyridoxal 5'-phosphate serves as cofactor. In terms of processing, phosphorylation at Tyr-164 inhibits activity and promotes cell survival. Widely expressed. Not detected in small intestine.

It localises to the endoplasmic reticulum membrane. It catalyses the reaction L-serine + hexadecanoyl-CoA + H(+) = 3-oxosphinganine + CO2 + CoA. The enzyme catalyses octadecanoyl-CoA + L-serine + H(+) = 3-oxoeicosasphinganine + CO2 + CoA. The catalysed reaction is tetradecanoyl-CoA + L-serine + H(+) = 3-oxohexadecasphinganine + CO2 + CoA. It carries out the reaction dodecanoyl-CoA + L-serine + H(+) = 3-oxotetradecasphinganine + CO2 + CoA. It functions in the pathway lipid metabolism; sphingolipid metabolism. Its activity is regulated as follows. SPT complex catalytic activity is negatively regulated by ORMDL proteins, including ORMDL3, in the presence of ceramides. This mechanism allows to maintain ceramide levels at sufficient concentrations for the production of complex sphingolipids, but which prevents the accumulation of ceramides to levels that trigger apoptosis. In terms of biological role, component of the serine palmitoyltransferase multisubunit enzyme (SPT) that catalyzes the initial and rate-limiting step in sphingolipid biosynthesis by condensing L-serine and activated acyl-CoA (most commonly palmitoyl-CoA) to form long-chain bases. The SPT complex is also composed of SPTLC2 or SPTLC3 and SPTSSA or SPTSSB. Within this complex, the heterodimer with SPTLC2 or SPTLC3 forms the catalytic core. The composition of the serine palmitoyltransferase (SPT) complex determines the substrate preference. The SPTLC1-SPTLC2-SPTSSA complex shows a strong preference for C16-CoA substrate, while the SPTLC1-SPTLC3-SPTSSA isozyme uses both C14-CoA and C16-CoA as substrates, with a slight preference for C14-CoA. The SPTLC1-SPTLC2-SPTSSB complex shows a strong preference for C18-CoA substrate, while the SPTLC1-SPTLC3-SPTSSB isozyme displays an ability to use a broader range of acyl-CoAs, without apparent preference. Required for adipocyte cell viability and metabolic homeostasis. The chain is Serine palmitoyltransferase 1 (SPTLC1) from Homo sapiens (Human).